A 423-amino-acid chain; its full sequence is Diels-Alderase cheD (423 aa).

The signal sequence occupies residues 1–18 (MKLCALFAGAVISTSAVA). 2 N-linked (GlcNAc...) asparagine glycosylation sites follow: Asn-84 and Asn-132.

It belongs to the Diels-Alderase family.

It functions in the pathway secondary metabolite biosynthesis. In terms of biological role, diels-Alderase; part of the gene cluster that mediates the biosynthesis of chaetoglobosin A which has a unique inhibitory activity against actin polymerization in mammalian cells. Chaetoglobosin A and its intermediates are involved in the morphological differentiation of C.globosum. The first step of the pathway is the synthesis of prochaetoglobosin I via condensation of one acetyl-CoA, 8 malonyl-CoA, and a L-tryptophan molecule by the PKS-NRPS hybrid synthetase cheA, followed by reduction of backbone double bond to install desired geometry by the enoyl reductase cheB. Further multiple oxidation steps performed by the cytochrome P450 monooxygenases cheE and cheG, as well as by the FAD-linked oxidoreductase cheF, lead to the formation of chaetoglobosin A. Depending on the order of action of these reductases, distinct intermediates can be identified. Within the pathway, the cytochrome P450 monooxygenase cheE catalyzes a stereospecific epoxidation on prochaetoglobosin I, cytoglobosin D, and chaetoglobosin J intermediates. The FAD-linked oxidoreductase cheF performs dehydrogenation of the C-20 hydroxyl groups in the 20-dihyrochaetoglobosin A and cytoglobosin D intermediates. Finally, the cytochrome P450 monooxygenase cheG can catalyze the stereospecific dihydroxylation of prochaetoglobosin I and prochaetoglobosin IV at C-19 and C-20, respectively. The Diels-Alderase cheD may play a role in the post-PKS-NRPS biosynthetic steps catalyzing Diels-Alder cyclization. The sequence is that of Diels-Alderase cheD from Chaetomium globosum (strain ATCC 6205 / CBS 148.51 / DSM 1962 / NBRC 6347 / NRRL 1970) (Soil fungus).